The following is a 194-amino-acid chain: Adenylate kinase isoenzyme 1 (194 aa).

Residue Met-1 is modified to N-acetylmethionine. Residue 18-23 (GSGKGT) participates in ATP binding. Residue Ser-38 is modified to Phosphoserine. The interval 38–67 (STGDLLRSEVSSGSARGKKLSEIMEKGQLV) is NMP. AMP contacts are provided by residues Thr-39, Arg-44, 65 to 67 (QLV), 94 to 97 (GYPR), and Gln-101. The LID stretch occupies residues 131–141 (KRGETSGRVDD). Residue Arg-132 participates in ATP binding. Residues Arg-138 and Arg-149 each contribute to the AMP site. Gly-177 contacts ATP.

This sequence belongs to the adenylate kinase family. AK1 subfamily. In terms of assembly, monomer. Mg(2+) is required as a cofactor.

The protein localises to the cytoplasm. It carries out the reaction a ribonucleoside 5'-phosphate + ATP = a ribonucleoside 5'-diphosphate + ADP. The catalysed reaction is AMP + ATP = 2 ADP. The enzyme catalyses dAMP + ATP = dADP + ADP. It catalyses the reaction dATP + AMP = dADP + ADP. It carries out the reaction dAMP + dATP = 2 dADP. The catalysed reaction is a 2'-deoxyribonucleoside 5'-diphosphate + ATP = a 2'-deoxyribonucleoside 5'-triphosphate + ADP. The enzyme catalyses a ribonucleoside 5'-diphosphate + ATP = a ribonucleoside 5'-triphosphate + ADP. It catalyses the reaction CDP + GTP = CTP + GDP. It carries out the reaction GDP + ATP = GTP + ADP. The catalysed reaction is UDP + ATP = UTP + ADP. The enzyme catalyses GTP + UDP = UTP + GDP. It catalyses the reaction dTDP + GTP = dTTP + GDP. It carries out the reaction dCDP + GTP = dCTP + GDP. The catalysed reaction is dGDP + ATP = dGTP + ADP. The enzyme catalyses dADP + GTP = dATP + GDP. It catalyses the reaction thiamine diphosphate + ADP = thiamine triphosphate + AMP. Its function is as follows. Catalyzes the reversible transfer of the terminal phosphate group between ATP and AMP. Also displays broad nucleoside diphosphate kinase activity. Plays an important role in cellular energy homeostasis and in adenine nucleotide metabolism. Also catalyzes at a very low rate the synthesis of thiamine triphosphate (ThTP) from thiamine diphosphate (ThDP) and ADP. The sequence is that of Adenylate kinase isoenzyme 1 from Homo sapiens (Human).